We begin with the raw amino-acid sequence, 510 residues long: Glycerol kinase (510 aa).

ADP is bound at residue T13. Residues T13 and T14 each contribute to the ATP site. A sn-glycerol 3-phosphate-binding site is contributed by T13. R17 is an ADP binding site. Residues R83, E84, Y135, and D255 each contribute to the sn-glycerol 3-phosphate site. Glycerol is bound by residues R83, E84, Y135, D255, and Q256. ADP-binding residues include T277, G321, G421, and N425. Residues T277, G321, and G421 each contribute to the ATP site.

It belongs to the FGGY kinase family.

It catalyses the reaction glycerol + ATP = sn-glycerol 3-phosphate + ADP + H(+). It functions in the pathway polyol metabolism; glycerol degradation via glycerol kinase pathway; sn-glycerol 3-phosphate from glycerol: step 1/1. Functionally, key enzyme in the regulation of glycerol uptake and metabolism. Catalyzes the phosphorylation of glycerol to yield sn-glycerol 3-phosphate. In Halobacterium salinarum (strain ATCC 29341 / DSM 671 / R1), this protein is Glycerol kinase.